Reading from the N-terminus, the 451-residue chain is Spermidine sinapoyl-CoA acyltransferase (451 aa).

Residues Tyr-47, His-169, Ser-294, Asp-316, and Leu-378 each coordinate spermidine. The active-site Proton acceptor is the His-169. Asp-391 (proton acceptor) is an active-site residue.

This sequence belongs to the plant acyltransferase family. Monomer. Predominantly expressed in siliques, especially in seeds around the embryo, and, at low levels, in flowers. Barely detectable in stems, leaves, and roots.

The catalysed reaction is 2 (E)-sinapoyl-CoA + spermidine = N(1),N(8)-bis[(E)-sinapoyl]-spermidine + 2 CoA + 2 H(+). The protein operates within amine and polyamine metabolism; spermidine metabolism. Spermidine sinapoyl-CoA acyltransferase that mediates the accumulation of disinapoyl spermidine conjugates in seeds. Catalyzes the two conjugating steps required for the biosynthesis of N1,N8-disipanoyl-spermidine. Can also use putrescine as an acyl acceptor to convert it into monosinapoyl-putrescine. The polypeptide is Spermidine sinapoyl-CoA acyltransferase (Arabidopsis thaliana (Mouse-ear cress)).